The sequence spans 670 residues: Leucine-rich repeat-containing protein 45 (670 aa).

LRR repeat units follow at residues 87–108, 115–136, 145–166, 173–194, and 201–223; these read TVKS…ALGK, SIRS…FSFF, FLQR…ELAM, SLQE…ALLN, and TLKK…VEQA. A coiled-coil region spans residues 234–645; it reads LSETQNRTSV…ISRMKEEEAQ (412 aa).

As to quaternary structure, homomer.

Its subcellular location is the cytoplasm. It localises to the cytoskeleton. The protein localises to the microtubule organizing center. It is found in the centrosome. Functionally, component of the proteinaceous fiber-like linker between two centrioles, required for centrosome cohesion. The polypeptide is Leucine-rich repeat-containing protein 45 (LRRC45) (Gallus gallus (Chicken)).